The sequence spans 286 residues: Probable endonuclease 4 (286 aa).

9 residues coordinate Zn(2+): histidine 72, histidine 112, glutamate 147, aspartate 181, histidine 184, histidine 215, aspartate 228, histidine 230, and glutamate 260.

The protein belongs to the AP endonuclease 2 family. Requires Zn(2+) as cofactor.

The enzyme catalyses Endonucleolytic cleavage to 5'-phosphooligonucleotide end-products.. Functionally, endonuclease IV plays a role in DNA repair. It cleaves phosphodiester bonds at apurinic or apyrimidinic (AP) sites, generating a 3'-hydroxyl group and a 5'-terminal sugar phosphate. The protein is Probable endonuclease 4 of Mycoplasma pneumoniae (strain ATCC 29342 / M129 / Subtype 1) (Mycoplasmoides pneumoniae).